Reading from the N-terminus, the 151-residue chain is MNLSSLKPVKGSTKTCKRVGRGQGSGCGGTSTRGHKGQKSRSGYSKKIGFEGGQMPIQRRLPKFGFKSINRVEYKAVNLSVIQSLIDTRCLAKIGIDDLVDAGIVSANRLVKILAGGIITSVVEVTAHAFSEKAEKAILKVGGTVIRTLKQ.

The interval 1 to 45 (MNLSSLKPVKGSTKTCKRVGRGQGSGCGGTSTRGHKGQKSRSGYS) is disordered. Gly residues predominate over residues 21 to 31 (RGQGSGCGGTS).

It belongs to the universal ribosomal protein uL15 family. As to quaternary structure, part of the 50S ribosomal subunit.

Binds to the 23S rRNA. This chain is Large ribosomal subunit protein uL15, found in Azobacteroides pseudotrichonymphae genomovar. CFP2.